The sequence spans 104 residues: Putative arsenate reductase (104 aa).

Cys-12 is an active-site residue.

The protein belongs to the ArsC family.

It carries out the reaction [glutaredoxin]-dithiol + arsenate + glutathione + H(+) = glutathionyl-S-S-[glutaredoxin] + arsenite + H2O. Functionally, reduction of arsenate [As(V)] to arsenite [As(III)]. This protein expands the substrate specificity of ArsAB pump which can extrude arsenite and antimonite to allow for arsenate pumping and resistance. The polypeptide is Putative arsenate reductase (yfjU) (Escherichia coli (strain K12)).